Here is a 2027-residue protein sequence, read N- to C-terminus: Dedicator of cytokinesis protein 3 (2027 aa).

Residues 6–67 enclose the SH3 domain; the sequence is EEEKYGVVIC…PANYIHLKKA (62 aa). Residues 421–598 enclose the C2 DOCK-type domain; it reads RNDLYLTLEK…ESFFISTQLS (178 aa). Residues 1225 to 1632 enclose the DOCKER domain; that stretch reads KSEINKEEMY…LYHEFPGLDK (408 aa). Position 1655 is a phosphoserine (serine 1655). Disordered regions lie at residues 1672–1695, 1731–1768, 1846–1925, and 1971–2027; these read GTGR…MMMM, SSSQ…SLPD, DTPP…DEGL, and PPKP…RGEQ. Composition is skewed to low complexity over residues 1676 to 1695 and 1731 to 1751; these read HSSS…MMMM and SSSQ…APSQ. A compositionally biased stretch (polar residues) spans 1752-1763; that stretch reads MITSAPSSTRGS. Positions 1877 to 1899 are enriched in low complexity; it reads GSNSTLSGSASSGVSSLSESNFG. The short motif at 1967–1973 is the SH3-binding element; it reads PPALPPK. Basic and acidic residues-rich tracts occupy residues 1981-1998 and 2011-2027; these read ALEH…ERPR and VKEE…RGEQ.

Belongs to the DOCK family. In terms of assembly, interacts with presenilin proteins PSEN1 and PSEN2. Interacts with CRK. In terms of tissue distribution, expressed in brain, spinal cord, pituitary gland, testis. Not expressed in heart, liver, kidney, spleen and lung. In brain, it is highly expressed in the cerebral cortex and hippocampus, while it is absent in other tissues, except in spinal cord. In the cerebral cortex, it is found within the intermediate (III and IV) and deep (V and VI) layers, whereas it is weakly expressed in superficial layer I. It is also abundant in the piriform cortex. Within the hippocampus, it is expressed in the pyramidal neurons of the CA1, CA2, and CA3 regions and the dentate gyrus.

The protein resides in the cytoplasm. In terms of biological role, potential guanine nucleotide exchange factor (GEF). GEF proteins activate some small GTPases by exchanging bound GDP for free GTP. Its interaction with presenilin proteins as well as its ability to stimulate Tau/MAPT phosphorylation suggest that it may be involved in Alzheimer disease. Ectopic expression in nerve cells decreases the secretion of amyloid-beta APBA1 protein and lowers the rate of cell-substratum adhesion, suggesting that it may affect the function of some small GTPase involved in the regulation of actin cytoskeleton or cell adhesion receptors. In Mus musculus (Mouse), this protein is Dedicator of cytokinesis protein 3 (Dock3).